A 171-amino-acid chain; its full sequence is Co-chaperone protein HscB homolog (171 aa).

The J domain occupies 2 to 74; the sequence is NYFELFGLPI…LRRAEYLLSL (73 aa).

Belongs to the HscB family. As to quaternary structure, interacts with HscA and stimulates its ATPase activity.

In terms of biological role, co-chaperone involved in the maturation of iron-sulfur cluster-containing proteins. Seems to help targeting proteins to be folded toward HscA. This is Co-chaperone protein HscB homolog from Vibrio cholerae serotype O1 (strain M66-2).